The sequence spans 234 residues: N-(5'-phosphoribosyl)anthranilate isomerase 1 (234 aa).

It belongs to the TrpF family.

It carries out the reaction N-(5-phospho-beta-D-ribosyl)anthranilate = 1-(2-carboxyphenylamino)-1-deoxy-D-ribulose 5-phosphate. The protein operates within amino-acid biosynthesis; L-tryptophan biosynthesis; L-tryptophan from chorismate: step 3/5. This Methanosarcina mazei (strain ATCC BAA-159 / DSM 3647 / Goe1 / Go1 / JCM 11833 / OCM 88) (Methanosarcina frisia) protein is N-(5'-phosphoribosyl)anthranilate isomerase 1 (trpF1).